We begin with the raw amino-acid sequence, 611 residues long: V-type proton ATPase catalytic subunit A (611 aa).

Residue 244 to 251 coordinates ATP; it reads GAFGCGKT.

The protein belongs to the ATPase alpha/beta chains family. V-ATPase is a heteromultimeric enzyme made up of two complexes: the ATP-hydrolytic V1 complex and the proton translocation V0 complex. The V1 complex consists of three catalytic AB heterodimers that form a heterohexamer, three peripheral stalks each consisting of EG heterodimers, one central rotor including subunits D and F, and the regulatory subunits C and H. The proton translocation complex V0 consists of the proton transport subunit a, a ring of proteolipid subunits c9c'', rotary subunit d and subunit e.

The protein resides in the cell membrane. Its subcellular location is the vacuole. It localises to the vesicle. It catalyses the reaction ATP + H2O + 4 H(+)(in) = ADP + phosphate + 5 H(+)(out). With respect to regulation, ATP hydrolysis occurs at the interface between the nucleotide-binding domains of subunits A and B. ATP hydrolysis triggers a conformational change in the subunits D and F, which induces a shift of subunit d. The c-ring is subsequently rotated and results in a continuous proton translocation across the membrane. In terms of biological role, catalytic subunit of the V1 complex of vacuolar(H+)-ATPase (V-ATPase), a multisubunit enzyme composed of a peripheral complex (V1) that hydrolyzes ATP and a membrane integral complex (V0) that translocates protons. V-ATPase is responsible for acidifying and maintaining the pH of intracellular compartments and in some cell types, is targeted to the plasma membrane, where it is responsible for acidifying the extracellular environment. During the trophozoite stage, involved in the acidification of the extracellular space next to the cell membrane. The protein is V-type proton ATPase catalytic subunit A of Plasmodium falciparum (isolate 3D7).